The chain runs to 415 residues: Thyroxine-binding globulin (415 aa).

The first 20 residues, 1–20, serve as a signal peptide directing secretion; the sequence is MSPFLYLVLLVLGLHATIHC. N36, N99, N165, and N253 each carry an N-linked (GlcNAc...) asparagine glycan. Positions 293 and 398 each coordinate thyroxine.

This sequence belongs to the serpin family.

It localises to the secreted. In terms of biological role, major thyroid hormone transport protein in serum. This chain is Thyroxine-binding globulin (SERPINA7), found in Pan troglodytes (Chimpanzee).